The primary structure comprises 142 residues: Putative pre-16S rRNA nuclease (142 aa).

This sequence belongs to the YqgF nuclease family.

It localises to the cytoplasm. Could be a nuclease involved in processing of the 5'-end of pre-16S rRNA. The sequence is that of Putative pre-16S rRNA nuclease from Photobacterium profundum (strain SS9).